Here is a 621-residue protein sequence, read N- to C-terminus: Glutathione-regulated potassium-efflux system protein KefC (621 aa).

12 helical membrane-spanning segments follow: residues 4 to 24 (HTLIQALIYLGAAALIVPVAV), 26 to 46 (LGLGSVLGYLIAGCIIGPWGF), 54 to 74 (SILHFAEIGVVLMLFVIGLEL), 90 to 110 (GALQMIACGALLGGFCILLGM), 114 to 134 (VAELIGMTLALSSTAIAMQAM), 151 to 171 (VLLFQDIAAIPLVAMIPLLAV), 178 to 198 (LGAFALSALKVAGALALVILL), 218 to 238 (VFSAVALFLVFGFGLLLEEAG), 270 to 290 (GLLLGLFFIGVGMSVDFGTLV), 294 to 314 (LRILILLVGFLVIKMGMLWLI), 327 to 347 (WFAVLLGQGSEFAFVVFGAAQ), and 359 to 379 (ALTLAVALSMAVTPILLVLLT). In terms of domain architecture, RCK N-terminal spans 399 to 518 (QPRVIIAGFG…AGVETPERET (120 aa)). The interval 591-621 (LSLTQRHGWQGTEEGKHTGDPRDEPESKPTV) is disordered. Positions 603 to 621 (EEGKHTGDPRDEPESKPTV) are enriched in basic and acidic residues.

Belongs to the monovalent cation:proton antiporter 2 (CPA2) transporter (TC 2.A.37) family. KefC subfamily. Homodimer. Interacts with the regulatory subunit KefF.

The protein resides in the cell inner membrane. In terms of biological role, pore-forming subunit of a potassium efflux system that confers protection against electrophiles. Catalyzes K(+)/H(+) antiport. This Enterobacter sp. (strain 638) protein is Glutathione-regulated potassium-efflux system protein KefC.